We begin with the raw amino-acid sequence, 541 residues long: Chaperonin GroEL (541 aa).

ATP contacts are provided by residues 30–33, Lys-51, 87–91, Gly-415, and Asp-495; these read TLGP and DGTTT.

It belongs to the chaperonin (HSP60) family. As to quaternary structure, forms a cylinder of 14 subunits composed of two heptameric rings stacked back-to-back. Interacts with the co-chaperonin GroES.

The protein localises to the cytoplasm. It carries out the reaction ATP + H2O + a folded polypeptide = ADP + phosphate + an unfolded polypeptide.. Together with its co-chaperonin GroES, plays an essential role in assisting protein folding. The GroEL-GroES system forms a nano-cage that allows encapsulation of the non-native substrate proteins and provides a physical environment optimized to promote and accelerate protein folding. This Pantoea ananas (Erwinia uredovora) protein is Chaperonin GroEL.